A 92-amino-acid polypeptide reads, in one-letter code: RIIa domain-containing protein 1 (92 aa).

The RIIa domain occupies 43–77 (KEVELLISGFFREMFLKRPDNIPEFAADYFTDPRL).

In Bos taurus (Bovine), this protein is RIIa domain-containing protein 1 (RIIAD1).